The following is a 167-amino-acid chain: MAIRRICELPEPVLRKKAKKVPSIDGSIQTLIDDMIETMNSADGAGLAAPQVGVSLRLVVFREPDTKEATVLINPEIVKKEGQRQVTEGCLSIPGYFGELTRAETVTAKGLDRHGKACRIKGTGIVAQLLEHETEHLDGILYIDHLESEDQLHEIGPDDEMPEEIRE.

Fe cation is bound by residues C90 and H132. E133 is a catalytic residue. Residue H136 coordinates Fe cation.

It belongs to the polypeptide deformylase family. It depends on Fe(2+) as a cofactor.

It catalyses the reaction N-terminal N-formyl-L-methionyl-[peptide] + H2O = N-terminal L-methionyl-[peptide] + formate. Functionally, removes the formyl group from the N-terminal Met of newly synthesized proteins. Requires at least a dipeptide for an efficient rate of reaction. N-terminal L-methionine is a prerequisite for activity but the enzyme has broad specificity at other positions. In Dehalococcoides mccartyi (strain CBDB1), this protein is Peptide deformylase.